We begin with the raw amino-acid sequence, 699 residues long: Transketolase (699 aa).

His-45 serves as a coordination point for substrate. Thiamine diphosphate-binding positions include Thr-48, His-85, and 133–135 (GPL). Asp-177 provides a ligand contact to Mg(2+). Thiamine diphosphate is bound by residues Gly-178 and Asn-207. Mg(2+) is bound by residues Asn-207 and Ile-209. Substrate-binding residues include His-283, Arg-378, and Ser-405. His-283 is a binding site for thiamine diphosphate. Glu-441 acts as the Proton donor in catalysis. Phe-467 contacts thiamine diphosphate. Substrate contacts are provided by His-491, Asp-499, and Arg-552.

The protein belongs to the transketolase family. Homodimer. It depends on Mg(2+) as a cofactor. Requires Ca(2+) as cofactor. Mn(2+) serves as cofactor. The cofactor is Co(2+). Thiamine diphosphate is required as a cofactor.

The catalysed reaction is D-sedoheptulose 7-phosphate + D-glyceraldehyde 3-phosphate = aldehydo-D-ribose 5-phosphate + D-xylulose 5-phosphate. Its function is as follows. Catalyzes the transfer of a two-carbon ketol group from a ketose donor to an aldose acceptor, via a covalent intermediate with the cofactor thiamine pyrophosphate. This is Transketolase (tkt) from Mycobacterium leprae (strain TN).